The following is a 212-amino-acid chain: uncharacterized protein (212 aa).

This is an uncharacterized protein from Saccharolobus islandicus (Sulfolobus islandicus).